A 757-amino-acid polypeptide reads, in one-letter code: 5-methyltetrahydropteroyltriglutamate--homocysteine methyltransferase (757 aa).

5-methyltetrahydropteroyltri-L-glutamate is bound by residues 17 to 20 and Lys115; that span reads RELK. L-homocysteine is bound by residues 430–432 and Glu483; that span reads IGS. L-methionine is bound by residues 430–432 and Glu483; that span reads IGS. 5-methyltetrahydropteroyltri-L-glutamate contacts are provided by residues 514-515 and Trp560; that span reads RC. Residue Asp598 participates in L-homocysteine binding. L-methionine is bound at residue Asp598. Glu604 serves as a coordination point for 5-methyltetrahydropteroyltri-L-glutamate. Positions 640, 642, and 664 each coordinate Zn(2+). His693 serves as the catalytic Proton donor. Cys725 serves as a coordination point for Zn(2+).

Belongs to the vitamin-B12 independent methionine synthase family. The cofactor is Zn(2+).

The enzyme catalyses 5-methyltetrahydropteroyltri-L-glutamate + L-homocysteine = tetrahydropteroyltri-L-glutamate + L-methionine. The protein operates within amino-acid biosynthesis; L-methionine biosynthesis via de novo pathway; L-methionine from L-homocysteine (MetE route): step 1/1. Functionally, catalyzes the transfer of a methyl group from 5-methyltetrahydrofolate to homocysteine resulting in methionine formation. In Buchnera aphidicola subsp. Schizaphis graminum (strain Sg), this protein is 5-methyltetrahydropteroyltriglutamate--homocysteine methyltransferase.